The sequence spans 152 residues: Protein FYV5 (152 aa).

The next 5 membrane-spanning stretches (helical) occupy residues 26–46 (IISI…RICS), 56–76 (LISS…SCVL), 82–102 (VGII…VLFL), 106–126 (LIDL…TPFF), and 127–147 (FMLH…YLII).

The protein resides in the cell membrane. The protein localises to the secreted. It localises to the cell wall. Functionally, involved in maintaining an adequate ionic strength homeostasis of the cellular aqueous environment, necessary for normal growth rate. Required for survival upon exposure to K1 killer toxin and hence plays a role in cell wall glucan synthesis. Required for dithiothreitol (DTT) resistance. Involved in cell cycle progression. The protein is Protein FYV5 (FYV5) of Saccharomyces cerevisiae (strain ATCC 204508 / S288c) (Baker's yeast).